Reading from the N-terminus, the 447-residue chain is Na(+)-translocating NADH-quinone reductase subunit A (447 aa).

Belongs to the NqrA family. Composed of six subunits; NqrA, NqrB, NqrC, NqrD, NqrE and NqrF.

The catalysed reaction is a ubiquinone + n Na(+)(in) + NADH + H(+) = a ubiquinol + n Na(+)(out) + NAD(+). Functionally, NQR complex catalyzes the reduction of ubiquinone-1 to ubiquinol by two successive reactions, coupled with the transport of Na(+) ions from the cytoplasm to the periplasm. NqrA to NqrE are probably involved in the second step, the conversion of ubisemiquinone to ubiquinol. This is Na(+)-translocating NADH-quinone reductase subunit A from Klebsiella pneumoniae subsp. pneumoniae (strain ATCC 700721 / MGH 78578).